A 109-amino-acid polypeptide reads, in one-letter code: Thiosulfate sulfurtransferase GlpE (109 aa).

The Rhodanese domain occupies 17 to 105 (HQQTAVLVDI…WHRHFPAEVA (89 aa)). Catalysis depends on Cys65, which acts as the Cysteine persulfide intermediate.

This sequence belongs to the GlpE family.

It localises to the cytoplasm. The enzyme catalyses thiosulfate + hydrogen cyanide = thiocyanate + sulfite + 2 H(+). It catalyses the reaction thiosulfate + [thioredoxin]-dithiol = [thioredoxin]-disulfide + hydrogen sulfide + sulfite + 2 H(+). Transferase that catalyzes the transfer of sulfur from thiosulfate to thiophilic acceptors such as cyanide or dithiols. May function in a CysM-independent thiosulfate assimilation pathway by catalyzing the conversion of thiosulfate to sulfite, which can then be used for L-cysteine biosynthesis. The chain is Thiosulfate sulfurtransferase GlpE from Klebsiella pneumoniae (strain 342).